We begin with the raw amino-acid sequence, 92 residues long: MARSLKKNPFVANHSLRKIENLNIKKEKKIIVTWSRASTIVPAMIGHTIAVHNGKEHLPIYITDRMVGHKLGEFAPTLIPRGHAKSDNRSRR.

It belongs to the universal ribosomal protein uS19 family.

The protein resides in the plastid. It is found in the chloroplast. Its function is as follows. Protein S19 forms a complex with S13 that binds strongly to the 16S ribosomal RNA. This chain is Small ribosomal subunit protein uS19c, found in Cycas taitungensis (Prince sago).